A 147-amino-acid polypeptide reads, in one-letter code: Angiogenin (147 aa).

Residues 1-24 form the signal peptide; that stretch reads MVILLGPLLLVFMLGLGLAPLSLA. The active-site Proton acceptor is His-37. TRNA contacts are provided by Arg-45 and Asp-46. Disulfide bonds link Cys-50-Cys-104, Cys-63-Cys-115, and Cys-81-Cys-130. Positions 55–59 match the Nucleolar localization signal motif; that stretch reads KQRGL. TRNA-binding residues include Cys-104 and Ile-126. His-137 functions as the Proton donor in the catalytic mechanism.

It belongs to the pancreatic ribonuclease family. In terms of assembly, homodimer. Interacts with RNH1; inhibiting ANG ribonuclease activity. Interacts with PCNA.

Its subcellular location is the secreted. The protein localises to the nucleus. The protein resides in the nucleolus. It is found in the cytoplasm. It localises to the stress granule. With respect to regulation, has weak tRNA ribonuclease activity by itself due to partial autoinhibition by its C-terminus, which folds into a short alpha-helix that partially occludes the substrate-binding site. In absence of stress, the ribonuclease activity is inhibited by RNH1 in the cytoplasm. In response to stress, dissociates from RNH1 in the cytoplasm and associates with cytoplasmic ribosomes with vacant A-sites: ribosomes directly activate the tRNA ribonuclease activity of ANG by refolding the C-terminal alpha-helix. In response to stress, the angiogenic activity of ANG is inhibited by RNH1 in the nucleus. Secreted ribonuclease that can either promote or restrict cell proliferation of target cells, depending on the context. Endocytosed in target cells via its receptor PLXNB2 and translocates to the cytoplasm or nucleus. Under stress conditions, localizes to the cytoplasm and promotes the assembly of stress granules (SGs): specifically cleaves a subset of tRNAs within anticodon loops to produce tRNA-derived stress-induced fragments (tiRNAs), resulting in translation repression and inhibition of cell proliferation. tiRNas also prevent formation of apoptosome, thereby promoting cell survival. Preferentially cleaves RNAs between a pyrimidine and an adenosine residue, suggesting that it cleaves the anticodon loop of tRNA(Ala) (32-UUAGCAU-38) after positions 33 and 36. Cleaves a subset of tRNAs, including tRNA(Ala), tRNA(Glu), tRNA(Gly), tRNA(Lys), tRNA(Val), tRNA(His), tRNA(Asp) and tRNA(Sec). Under growth conditions and in differentiated cells, translocates to the nucleus and stimulates ribosomal RNA (rRNA) transcription, including that containing the initiation site sequences of 45S rRNA, thereby promoting cell growth and proliferation. Angiogenin induces vascularization of normal and malignant tissues via its ability to promote rRNA transcription. Involved in hematopoietic stem and progenitor cell (HSPC) growth and survival by promoting rRNA transcription in growth conditions and inhibiting translation in response to stress, respectively. Mediates the crosstalk between myeloid and intestinal epithelial cells to protect the intestinal epithelial barrier integrity: secreted by myeloid cells and promotes intestinal epithelial cells proliferation and survival. Also mediates osteoclast-endothelial cell crosstalk in growing bone: produced by osteoclasts and protects the neighboring vascular cells against senescence by promoting rRNA transcription. This is Angiogenin (ANG) from Sus scrofa (Pig).